Reading from the N-terminus, the 133-residue chain is p53 and DNA damage-regulated protein 1 (133 aa).

It belongs to the prefoldin subunit beta family. Component of the PAQosome complex which is responsible for the biogenesis of several protein complexes and which consists of R2TP complex members RUVBL1, RUVBL2, RPAP3 and PIH1D1, URI complex members PFDN2, PFDN6, PDRG1, UXT and URI1 as well as ASDURF, POLR2E and DNAAF10/WDR92.

Its subcellular location is the cytoplasm. Its function is as follows. May play a role in chaperone-mediated protein folding. This is p53 and DNA damage-regulated protein 1 (PDRG1) from Bos taurus (Bovine).